The primary structure comprises 653 residues: MDPSKQGTLNRVENSVYRTAFKLRSVQTLCQLDLMDSFLIQQVLWRGRSGESTETSISVQQLFQELRELFQRTGMGNAAQVHPRAPELTLSLLMAMFDRTGSGILKRQPVAAALVALSGDSPLTKYRAFFQLYAEKNRRGDDSQARMTRRVLRALLTDLQQIPTVVGESYTLRPVESAIHSCFRGVLSSGIKEEKFLSWAQSEPLVLLWLPTCYRLSAAETVTHPVRCSVCRTFPIIGLRYHCLKCLDFDICELCFLSGLHKNSHEKSHTVMEECVQMSATENTKLLFRSLRNNLPQKRQRVGAVGRQWLLDQLASRDSASHGPARLCLQYKCPKAPGYASSRRAVETAATGVLCQRPSPALQGNHNRHGQTIVNIKNELWRTRDSLNTLLRERRLLRKQLHRYKQKLQGTYALQEEQNCRFETKIRELTTNQDNLWTKLQQMRRDLQAMLQPLHPSSSPQTTASKIFHSLPDDGIRRGGDSSHIKRVTRDGPEWELLPNSAKVDRKHKCQASSGKALPDSEPQEIILQSTRKQNHPQKMLSKVHSSPSAHQQDTLQIPPTEVKIPAQTLSAGKEMESCSEKRNNLEDEELQALLPRLLDAFDLDSPTGLQPLMDMELYGRAQQVCRAFSVLVDQITLPTWSEEESRLKGPLV.

A ZZ-type zinc finger spans residues 223–279 (THPVRCSVCRTFPIIGLRYHCLKCLDFDICELCFLSGLHKNSHEKSHTVMEECVQMS). Cys228, Cys231, Cys243, Cys246, Cys252, Cys255, His265, and His269 together coordinate Zn(2+). Positions 384–411 (RDSLNTLLRERRLLRKQLHRYKQKLQGT) form a coiled coil.

As to expression, strongly expressed in the nervous and muscular tissues.

It is found in the cell membrane. This chain is Dystrotelin (Dytn), found in Mus musculus (Mouse).